The chain runs to 367 residues: Probable butyrate kinase (367 aa).

It belongs to the acetokinase family.

The protein localises to the cytoplasm. The enzyme catalyses butanoate + ATP = butanoyl phosphate + ADP. The polypeptide is Probable butyrate kinase (Bacillus cereus (strain ATCC 14579 / DSM 31 / CCUG 7414 / JCM 2152 / NBRC 15305 / NCIMB 9373 / NCTC 2599 / NRRL B-3711)).